Consider the following 364-residue polypeptide: Coproporphyrin III ferrochelatase (364 aa).

Residues Arg-29 and Tyr-118 each coordinate Fe-coproporphyrin III. Residues His-169 and Glu-250 each contribute to the Fe(2+) site.

Belongs to the ferrochelatase family.

The protein localises to the cytoplasm. The enzyme catalyses Fe-coproporphyrin III + 2 H(+) = coproporphyrin III + Fe(2+). The protein operates within porphyrin-containing compound metabolism; protoheme biosynthesis. Involved in coproporphyrin-dependent heme b biosynthesis. Catalyzes the insertion of ferrous iron into coproporphyrin III to form Fe-coproporphyrin III. This is Coproporphyrin III ferrochelatase from Streptococcus pneumoniae serotype 2 (strain D39 / NCTC 7466).